The chain runs to 371 residues: Probable RNA 3'-terminal phosphate cyclase-like protein (371 aa).

Belongs to the RNA 3'-terminal cyclase family. Type 2 subfamily. In terms of assembly, part of the small subunit (SSU) processome, composed of more than 70 proteins and the RNA chaperone small nucleolar RNA (snoRNA) U3.

The protein resides in the nucleus. Its subcellular location is the nucleolus. Functionally, part of the small subunit (SSU) processome, first precursor of the small eukaryotic ribosomal subunit. During the assembly of the SSU processome in the nucleolus, many ribosome biogenesis factors, an RNA chaperone and ribosomal proteins associate with the nascent pre-rRNA and work in concert to generate RNA folding, modifications, rearrangements and cleavage as well as targeted degradation of pre-ribosomal RNA by the RNA exosome. Does not have cyclase activity. This is Probable RNA 3'-terminal phosphate cyclase-like protein (rcl1) from Dictyostelium discoideum (Social amoeba).